The chain runs to 547 residues: Putative cysteine ligase BshC (547 aa).

A coiled-coil region spans residues 461–504; sequence ASTEATRSAIMDEMEALKQKVVRAEKRQQDEVRAQLKKAHTNLR.

Belongs to the BshC family.

The chain is Putative cysteine ligase BshC from Salinibacter ruber (strain DSM 13855 / M31).